Here is a 411-residue protein sequence, read N- to C-terminus: LIM domain-binding protein 1 (411 aa).

S2 carries the post-translational modification N-acetylserine. T61 bears the Phosphothreonine mark. Residues S265 and S302 each carry the phosphoserine modification. Disordered regions lie at residues 283–330 (APPA…TFAL) and 367–411 (DAAN…QASQ). Over residues 302–318 (SGGSTMSSGGGNTNNSN) the composition is skewed to low complexity. Residues 336–375 (DVMVVGEPTLMGGEFGDEDERLITRLENTQFDAANGIDDE) form the LIM interaction domain (LID) domain.

It belongs to the LDB family. As to quaternary structure, interacts with ESR1. Forms homodimers and heterodimers. Interacts with and activates LHX1/LIM1. Interacts with the LIM domains of ISL1 and LMO2. Can assemble in a complex with LMO2 and TAL1/SCL but does not interact with TAL1/SCL directly. Strongly interacts with the LIM2 domain of LMX1A and more weakly with the LIM1 domain. Homodimerization is not required for, and does not effect, LMX1A-binding. Component of a nuclear TAL-1 complex composed at least of CBFA2T3, LDB1, TAL1 and TCF3. Interacts with LHX6 and LHX9. At neuronal promoters, forms a complex with LHX3 involved in the specification of interneurons, in motor neurons, it is displaced by ISL1 to form a ternary complex in which ISL1 contacts both LHX3 and LDB1. Interacts with SLK; leading to negatively regulate SLK kinase activity. Interacts with YWHAZ. Interacts with PRDM1/BLIMP1. Interacts with LMO4. Interacts with RLIM/RNF12; the interaction inhibits the ubiquitination of LMO proteins. Ubiquitinated by RLIM/RNF12, leading to its degradation by the proteasome. As to expression, expressed in a wide range of adult tissues including brain, heart, skeletal muscle, colon, thymus, spleen, kidney, liver, small intestine, lung and peripheral blood leukocytes.

Its subcellular location is the nucleus. In terms of biological role, binds to the LIM domain of a wide variety of LIM domain-containing transcription factors. May regulate the transcriptional activity of LIM-containing proteins by determining specific partner interactions. Plays a role in the development of interneurons and motor neurons in cooperation with LHX3 and ISL1. Acts synergistically with LHX1/LIM1 in axis formation and activation of gene expression. Acts with LMO2 in the regulation of red blood cell development, maintaining erythroid precursors in an immature state. This Homo sapiens (Human) protein is LIM domain-binding protein 1 (LDB1).